A 363-amino-acid polypeptide reads, in one-letter code: D-alanine--D-alanine ligase (363 aa).

In terms of domain architecture, ATP-grasp spans 148–353; sequence KKLLAAEGLP…YGTLVSTLIE (206 aa). ATP is bound at residue 176-231; that stretch reads RERLGLPVFVKPARAGSSIGITKVDDWAALDTAIAAAREHDPKVIVEAGIVGREVE. 3 residues coordinate Mg(2+): D308, E320, and N322.

Belongs to the D-alanine--D-alanine ligase family. The cofactor is Mg(2+). Mn(2+) is required as a cofactor.

It is found in the cytoplasm. The catalysed reaction is 2 D-alanine + ATP = D-alanyl-D-alanine + ADP + phosphate + H(+). Its pathway is cell wall biogenesis; peptidoglycan biosynthesis. Functionally, cell wall formation. This is D-alanine--D-alanine ligase from Nocardia farcinica (strain IFM 10152).